A 171-amino-acid polypeptide reads, in one-letter code: 3-hydroxydecanoyl-[acyl-carrier-protein] dehydratase (171 aa).

The active site involves His70.

The protein belongs to the thioester dehydratase family. FabA subfamily. Homodimer.

The protein resides in the cytoplasm. The enzyme catalyses a (3R)-hydroxyacyl-[ACP] = a (2E)-enoyl-[ACP] + H2O. The catalysed reaction is (3R)-hydroxydecanoyl-[ACP] = (2E)-decenoyl-[ACP] + H2O. It carries out the reaction (2E)-decenoyl-[ACP] = (3Z)-decenoyl-[ACP]. The protein operates within lipid metabolism; fatty acid biosynthesis. Necessary for the introduction of cis unsaturation into fatty acids. Catalyzes the dehydration of (3R)-3-hydroxydecanoyl-ACP to E-(2)-decenoyl-ACP and then its isomerization to Z-(3)-decenoyl-ACP. Can catalyze the dehydratase reaction for beta-hydroxyacyl-ACPs with saturated chain lengths up to 16:0, being most active on intermediate chain length. The chain is 3-hydroxydecanoyl-[acyl-carrier-protein] dehydratase from Xanthomonas campestris pv. campestris (strain 8004).